The primary structure comprises 577 residues: Arginine--tRNA ligase (577 aa).

The 'HIGH' region motif lies at 122-132 (PNVAKEMHVGH).

The protein belongs to the class-I aminoacyl-tRNA synthetase family. As to quaternary structure, monomer.

Its subcellular location is the cytoplasm. The catalysed reaction is tRNA(Arg) + L-arginine + ATP = L-arginyl-tRNA(Arg) + AMP + diphosphate. The protein is Arginine--tRNA ligase of Aliivibrio fischeri (strain ATCC 700601 / ES114) (Vibrio fischeri).